A 155-amino-acid chain; its full sequence is FHA domain-containing protein FhaB (155 aa).

The helical transmembrane segment at 6–28 (LQLTRVGFLLLLWLFIWSVLRIL) threads the bilayer. Thr36 is modified (phosphothreonine). One can recognise an FHA domain in the interval 83-132 (VLIGRADDSTLVLTDDYASTRHARLSPRGSEWYVEDLGSTNGTYLDRAKV).

In terms of processing, phosphorylated by PknB. Dephosphorylated by PstP.

The protein localises to the cell membrane. The chain is FHA domain-containing protein FhaB (fhaB) from Mycolicibacterium smegmatis (strain ATCC 700084 / mc(2)155) (Mycobacterium smegmatis).